The sequence spans 231 residues: 2-amino-5-formylamino-6-ribosylaminopyrimidin-4(3H)-one 5'-monophosphate deformylase (231 aa).

Fe cation contacts are provided by E29, H31, D40, and H110.

It belongs to the creatininase superfamily. FAPy deformylase family. As to quaternary structure, homodimer. It depends on Fe(2+) as a cofactor. Zn(2+) is required as a cofactor.

It carries out the reaction 2-amino-5-formylamino-6-(5-phospho-D-ribosylamino)pyrimidin-4(3H)-one + H2O = 2,5-diamino-6-(1-D-ribosylamino)pyrimidin-4(3H)-one 5'-phosphate + formate + H(+). It participates in cofactor biosynthesis; coenzyme F420 biosynthesis. Its pathway is cofactor biosynthesis; riboflavin biosynthesis. Functionally, catalyzes the hydrolysis of the formamide of 2-amino-5-formylamino-6-ribosylamino-4(3H)-pyrimidinone 5'-monophosphate (FAPy) to form 2,5-diamino-6-ribosylamino-4(3H)-pyrimidinone 5'-phosphate (APy). This chain is 2-amino-5-formylamino-6-ribosylaminopyrimidin-4(3H)-one 5'-monophosphate deformylase, found in Methanothermobacter marburgensis (strain ATCC BAA-927 / DSM 2133 / JCM 14651 / NBRC 100331 / OCM 82 / Marburg) (Methanobacterium thermoautotrophicum).